Consider the following 182-residue polypeptide: Bifunctional protein PyrR (182 aa).

Residues valine 97–threonine 109 carry the PRPP-binding motif.

This sequence belongs to the purine/pyrimidine phosphoribosyltransferase family. PyrR subfamily.

The enzyme catalyses UMP + diphosphate = 5-phospho-alpha-D-ribose 1-diphosphate + uracil. Regulates the transcription of the pyrimidine nucleotide (pyr) operon in response to exogenous pyrimidines. Functionally, also displays a weak uracil phosphoribosyltransferase activity which is not physiologically significant. The protein is Bifunctional protein PyrR of Synechococcus sp. (strain JA-2-3B'a(2-13)) (Cyanobacteria bacterium Yellowstone B-Prime).